Consider the following 270-residue polypeptide: Inositol monophosphatase (270 aa).

Mg(2+) contacts are provided by Glu-71, Asp-91, Leu-93, and Asp-94. Position 71 (Glu-71) interacts with substrate. Substrate is bound by residues 93-96, 194-196, Glu-213, and Asp-221; these read LDGT and GSC. Mg(2+) is bound at residue Asp-221.

This sequence belongs to the inositol monophosphatase superfamily. It depends on Mg(2+) as a cofactor.

The enzyme catalyses a myo-inositol phosphate + H2O = myo-inositol + phosphate. The protein operates within polyol metabolism; myo-inositol biosynthesis; myo-inositol from D-glucose 6-phosphate: step 2/2. Inhibited by Li(+). Responsible for the provision of inositol required for synthesis of phosphatidylinositol and polyphosphoinositides. This Mesembryanthemum crystallinum (Common ice plant) protein is Inositol monophosphatase (IMP1).